We begin with the raw amino-acid sequence, 202 residues long: Imidazoleglycerol-phosphate dehydratase (202 aa).

It belongs to the imidazoleglycerol-phosphate dehydratase family.

It localises to the cytoplasm. It carries out the reaction D-erythro-1-(imidazol-4-yl)glycerol 3-phosphate = 3-(imidazol-4-yl)-2-oxopropyl phosphate + H2O. It functions in the pathway amino-acid biosynthesis; L-histidine biosynthesis; L-histidine from 5-phospho-alpha-D-ribose 1-diphosphate: step 6/9. This is Imidazoleglycerol-phosphate dehydratase from Acinetobacter baumannii (strain AYE).